We begin with the raw amino-acid sequence, 131 residues long: Ribosomally synthesized cyclic peptide phomopsin precursor gigA (131 aa).

A signal peptide spans 1–18 (MQFTLIFFYATLAAFGLA). 5 propeptides span residues 19–38 (APSE…LDKR), 48–65 (ADLV…LDKR), 75–92 (ADMV…LDKR), 102–119 (ADMV…LAKR), and 129–131 (ADM).

GigA is processed by several endopeptidases including kexin proteases to produce 2 identical copies of the nonaxapeptide Ile-Asn-Phe-Lys-Ile-Pro-Tyr-Thr-Gly, one copy of the nonaketide Ile-Gly-Phe-Lys-Leu-Pro-Tyr-Arg-Gly and one copy of the nonaketide Pro-Asn-Phe-Lys-Met-Pro-Tyr-Arg-Gly, that are further modified into phomapsins B, C and A, respectively. After being excised from the precursor peptide, the core peptides are cyclized and modified post-translationally by enzymes encoded within the gene cluster. Epichloecyclin biosynthesis requires only dimethylation of the side-chain amino group of the conserved lysine for completion.

The protein operates within mycotoxin biosynthesis. Ribosomally synthesized cyclic peptide phomopsin precursor; part of the gene cluster that mediates the biosynthesis of the epichloecyclins, a group of nonapeptides, with a likely cyclic structure and dimethylation of the conserved lysine. The gigA translated product contains 4 repeated peptide embedding the nonapeptide Ile-Asn-Phe-Lys-Ile-Pro-Tyr-Thr-Gly in repeats 1 and 2, Ile-Gly-Phe-Lys-Leu-Pro-Tyr-Arg-Gly in repeat 3, and Pro-Asn-Phe-Lys-Met-Pro-Tyr-Arg-Gly in repeat 4 that are converted into epichloecyclins B, C and A, respectively. Moreover, removal of the last Gly residue in epichloecyclins B and C leads to epichloecyclins D and E, respectively. The protein is Ribosomally synthesized cyclic peptide phomopsin precursor gigA (nc25) of Epichloe festucae (strain Fl1).